We begin with the raw amino-acid sequence, 811 residues long: DNA mismatch repair protein MutS (811 aa).

Position 595-602 (595-602) interacts with ATP; that stretch reads GPNMSGKS.

The protein belongs to the DNA mismatch repair MutS family.

This protein is involved in the repair of mismatches in DNA. It is possible that it carries out the mismatch recognition step. This protein has a weak ATPase activity. The protein is DNA mismatch repair protein MutS of Pseudothermotoga lettingae (strain ATCC BAA-301 / DSM 14385 / NBRC 107922 / TMO) (Thermotoga lettingae).